Here is a 309-residue protein sequence, read N- to C-terminus: UDP-N-acetylenolpyruvoylglucosamine reductase (309 aa).

The FAD-binding PCMH-type domain maps to Arg34–Ala199. The active site involves Arg179. Residue Ser228 is the Proton donor of the active site. Residue Glu298 is part of the active site.

This sequence belongs to the MurB family. Requires FAD as cofactor.

Its subcellular location is the cytoplasm. The catalysed reaction is UDP-N-acetyl-alpha-D-muramate + NADP(+) = UDP-N-acetyl-3-O-(1-carboxyvinyl)-alpha-D-glucosamine + NADPH + H(+). It functions in the pathway cell wall biogenesis; peptidoglycan biosynthesis. Functionally, cell wall formation. The polypeptide is UDP-N-acetylenolpyruvoylglucosamine reductase (Rhodopseudomonas palustris (strain ATCC BAA-98 / CGA009)).